The following is a 621-amino-acid chain: Chaperone protein HtpG (621 aa).

The interval 1 to 328 (MKQEKKKFDA…SEDLPLNISR (328 aa)) is a; substrate-binding. Positions 329 to 544 (ESLQHNNVLE…EAAMDIRMER (216 aa)) are b. The interval 479-498 (VDQATSSSEEKNKDDKKSDD) is disordered. The segment covering 486 to 498 (SEEKNKDDKKSDD) has biased composition (basic and acidic residues). The interval 545–621 (FLIEQKQIAN…LNDIVQKAIL (77 aa)) is c.

It belongs to the heat shock protein 90 family. In terms of assembly, homodimer.

Its subcellular location is the cytoplasm. Its function is as follows. Molecular chaperone. Has ATPase activity. This Rickettsia bellii (strain OSU 85-389) protein is Chaperone protein HtpG.